Reading from the N-terminus, the 291-residue chain is DegV domain-containing protein CPE0026 (291 aa).

One can recognise a DegV domain in the interval 4 to 286 (FVIFTDSAAD…IGTLAVFFLG (283 aa)). Residues Thr63 and Ser95 each contribute to the hexadecanoate site.

Functionally, may bind long-chain fatty acids, such as palmitate, and may play a role in lipid transport or fatty acid metabolism. This is DegV domain-containing protein CPE0026 from Clostridium perfringens (strain 13 / Type A).